The chain runs to 319 residues: MNSAFSGPSSPTPGPSPPRPPLWPPLDFGLGALACCGACVFTNPLEVVKTRLQLQGELRARGSYRRLYRGVLQALWVVGRTDGLRGLQKGLTAALLYQGLMNGLRLGSYAQMQAAGVTDGPCCSLIAGAAAGALGAFIASPAYLVKTHLQAQTVAAIAVGHQHNHQGMSSALVSIYRREGVCGLWRGVNGAVPRVMVGSATQLATFSSAKDWITHTQWFSPLSSLNTLCAAVMSGVAVSIIMTPFDVISTRLYNQPVDQFKQGRLYCGFVDCLLKVCAAEGVLGLYKGMTPVFVRLAPHTTLSMLLWDVLRQRALPYTH.

Residues 1–22 (MNSAFSGPSSPTPGPSPPRPPL) form a disordered region. The segment covering 10–22 (SPTPGPSPPRPPL) has biased composition (pro residues). Solcar repeat units lie at residues 22-115 (LWPP…MQAA), 119-212 (DGPC…AKDW), and 222-313 (LSSL…LRQR). A run of 6 helical transmembrane segments spans residues 25–45 (PLDF…TNPL), 63–83 (SYRR…RTDG), 116–138 (GVTD…GAFI), 188–209 (VNGA…FSSA), 224–244 (SLNT…IMTP), and 296–319 (LAPH…PYTH).

It belongs to the mitochondrial carrier (TC 2.A.29) family.

It localises to the mitochondrion inner membrane. This chain is Solute carrier family 25 member 34 (slc25a34), found in Danio rerio (Zebrafish).